We begin with the raw amino-acid sequence, 80 residues long: MARKKAALDFEQSLADLQTLVERLENGELSLEDSLTAFEQGIGLTRDCQAALAQAEQKVQVLLERDGELAEEPFDADQPE.

This sequence belongs to the XseB family. As to quaternary structure, heterooligomer composed of large and small subunits.

The protein localises to the cytoplasm. The catalysed reaction is Exonucleolytic cleavage in either 5'- to 3'- or 3'- to 5'-direction to yield nucleoside 5'-phosphates.. Functionally, bidirectionally degrades single-stranded DNA into large acid-insoluble oligonucleotides, which are then degraded further into small acid-soluble oligonucleotides. This is Exodeoxyribonuclease 7 small subunit from Pseudomonas fluorescens (strain Pf0-1).